Reading from the N-terminus, the 533-residue chain is Calcium-dependent protein kinase 12 (533 aa).

The disordered stretch occupies residues methionine 1 to glycine 77. Glycine 2 is lipidated: N-myristoyl glycine. Residues glutamate 26–threonine 38 are compositionally biased toward basic and acidic residues. The segment covering glycine 57–alanine 69 has biased composition (low complexity). Positions tyrosine 91–leucine 349 constitute a Protein kinase domain. Residues leucine 97 to threonine 105 and lysine 120 each bind ATP. Aspartate 215 serves as the catalytic Proton acceptor. The tract at residues alanine 354 to isoleucine 384 is autoinhibitory domain. EF-hand domains are found at residues glutamate 391–arginine 426, isoleucine 427–leucine 462, glutamate 463–glycine 498, and aspartate 499–threonine 533. Ca(2+) is bound by residues aspartate 404, aspartate 406, serine 408, threonine 410, glutamate 415, aspartate 440, aspartate 442, serine 444, serine 446, glutamate 451, aspartate 476, aspartate 478, serine 480, tyrosine 482, glutamate 487, aspartate 511, aspartate 513, aspartate 515, arginine 517, and glutamate 522.

The protein belongs to the protein kinase superfamily. Ser/Thr protein kinase family. CDPK subfamily. In terms of tissue distribution, expressed in roots, leaf blades and developing seeds. Expressed in vascular tissues of roots and leaf blades. Expressed in the phloem tissue of the large vascular bundle in leaf blades.

Its subcellular location is the membrane. The enzyme catalyses L-seryl-[protein] + ATP = O-phospho-L-seryl-[protein] + ADP + H(+). It carries out the reaction L-threonyl-[protein] + ATP = O-phospho-L-threonyl-[protein] + ADP + H(+). Its activity is regulated as follows. Activated by calcium. Autophosphorylation may play an important role in the regulation of the kinase activity. May play a role in signal transduction pathways that involve calcium as a second messenger. Functions in signal transduction pathways that positively regulate responses to low-nitrogen. Functions in multiple signaling pathways, positively regulating salt tolerance and negatively modulating rice blast fungus resistance. May promote tolerance to salt stress by negatively regulating NADPH oxidase and positively regulating reactive oxygen species (ROS) scavengers. This Oryza sativa subsp. japonica (Rice) protein is Calcium-dependent protein kinase 12.